We begin with the raw amino-acid sequence, 403 residues long: tRNA pseudouridine synthase 4 (403 aa).

The active-site Nucleophile is the D75.

This sequence belongs to the pseudouridine synthase TruB family.

Its subcellular location is the nucleus. The protein resides in the mitochondrion. The enzyme catalyses uridine(55) in tRNA = pseudouridine(55) in tRNA. It catalyses the reaction a uridine in mRNA = a pseudouridine in mRNA. Functionally, responsible for synthesis of pseudouridine from uracil-55 in the psi GC loop of transfer RNAs. Also catalyzes pseudouridylation of mRNAs with the consensus sequence 5'-GGUUCRA-3'. This Saccharomyces cerevisiae (strain ATCC 204508 / S288c) (Baker's yeast) protein is tRNA pseudouridine synthase 4 (PUS4).